The following is a 271-amino-acid chain: MAIITKVSAQKRQGRYNIFLDQEYAFSVSEKTLAEFVLLKGQELSPQKINEILDYEASAKASDLAARYLSYQPRTIKEVTDYLSQHEISRSAAKRAVNELTHLGYLDDAAYARLFVKNNLQVGKNGPGAVRRDLKKKGIDDDLIEAALADVTDEEWAGVGKRLVKSLLGQQGKIAKREVDRKMQTKLLSHGFSGSLAQAVTQDLVPEADEDQERAALVKQGLKAYKRFKRYEPGVREQKMRQYLYSHGFSGDEISAFLVGEIIPLEELEEY.

The protein belongs to the RecX family.

It localises to the cytoplasm. Modulates RecA activity. The protein is Regulatory protein RecX of Lactobacillus delbrueckii subsp. bulgaricus (strain ATCC BAA-365 / Lb-18).